Consider the following 353-residue polypeptide: Outer membrane protein P5 (353 aa).

Residues 1–21 form the signal peptide; the sequence is MKKTAIALVVAGLAAASVAQA. The next 8 beta stranded transmembrane spans lie at 27–37, 58–69, 77–85, 104–115, 120–128, 158–167, 172–179, and 205–213; these read TFYAGVKAGQA, SFTYGVFGGYQI, LAVELGYDD, HGTHLSLKGSYE, LDVYGKAGV, GLFAVGAEYA, LAVRLEYQ, and SINAGISYR. An OmpA-like domain is found at 227–353; sequence VVSKTFSLNS…RVEIAVNGTK (127 aa). A disulfide bridge connects residues cysteine 326 and cysteine 338.

The protein belongs to the outer membrane OOP (TC 1.B.6) superfamily. OmpA family. Monomer and homodimer.

Its subcellular location is the cell outer membrane. In terms of biological role, with TolR probably plays a role in maintaining the position of the peptidoglycan cell wall in the periplasm. Acts as a porin with low permeability that allows slow penetration of small solutes; an internal gate slows down solute passage. Its function is as follows. Reconstitution in planar bilayers with lithium dodecyl sulfate-solublized P5 yields narrow pores (58 pS conductance) with a low probability of opening, whereas n-octyl-bD-glucopyranoside-solubilized P5 forms large pores (1.1 nS conductance) with high open probability. The large pore easily converts to the smaller pore at room temperature; at 42 degrees Celsius the smaller pore converts to the larger one. This chain is Outer membrane protein P5, found in Haemophilus influenzae (strain ATCC 51907 / DSM 11121 / KW20 / Rd).